Consider the following 403-residue polypeptide: DNA replication and repair protein RecF (403 aa).

30–37 (GSNGLGKT) is a binding site for ATP.

It belongs to the RecF family.

The protein localises to the cytoplasm. The RecF protein is involved in DNA metabolism; it is required for DNA replication and normal SOS inducibility. RecF binds preferentially to single-stranded, linear DNA. It also seems to bind ATP. This Bifidobacterium adolescentis (strain ATCC 15703 / DSM 20083 / NCTC 11814 / E194a) protein is DNA replication and repair protein RecF.